Here is a 327-residue protein sequence, read N- to C-terminus: Interleukin-12 subunit beta (327 aa).

The N-terminal stretch at 1–22 (MHPQQLVVSWFSLVLLTSPIVA) is a signal peptide. In terms of domain architecture, Ig-like C2-type spans 23-106 (IWELEKNVYV…LSRSLLLLHK (84 aa)). An intrachain disulfide couples Cys50 to Cys90. Asn223 carries an N-linked (GlcNAc...) asparagine glycan. The 90-residue stretch at 238-327 (PPKNLQLRPL…WSEWASVSCS (90 aa)) folds into the Fibronectin type-III domain.

The protein belongs to the IL-12B family. In terms of assembly, heterodimer with IL12A; disulfide-linked. The heterodimer is known as interleukin IL-12. Heterodimer with IL23A; disulfide-linked. The heterodimer is known as interleukin IL-23. Also secreted as a monomer. Interacts with NBR1; this interaction promotes IL-12 secretion.

Its subcellular location is the secreted. Its function is as follows. Cytokine that can act as a growth factor for activated T and NK cells, enhance the lytic activity of NK/lymphokine-activated killer cells, and stimulate the production of IFN-gamma by resting PBMC. In terms of biological role, associates with IL23A to form the IL-23 interleukin, a heterodimeric cytokine which functions in innate and adaptive immunity. IL-23 may constitute with IL-17 an acute response to infection in peripheral tissues. IL-23 binds to a heterodimeric receptor complex composed of IL12RB1 and IL23R, activates the Jak-Stat signaling cascade, stimulates memory rather than naive T-cells and promotes production of pro-inflammatory cytokines. IL-23 induces autoimmune inflammation and thus may be responsible for autoimmune inflammatory diseases and may be important for tumorigenesis. The protein is Interleukin-12 subunit beta (IL12B) of Cervus elaphus (Red deer).